A 181-amino-acid chain; its full sequence is Ribulose bisphosphate carboxylase small subunit, chloroplastic (181 aa).

A chloroplast-targeting transit peptide spans 1–54; that stretch reads MASSMLSSAAVVTSQLQATMVAPFTGLKSSAAFPVTRKTNTDITSIASNGGRVS.

Belongs to the RuBisCO small chain family. Heterohexadecamer of 8 large and 8 small subunits.

It localises to the plastid. Its subcellular location is the chloroplast. RuBisCO catalyzes two reactions: the carboxylation of D-ribulose 1,5-bisphosphate, the primary event in carbon dioxide fixation, as well as the oxidative fragmentation of the pentose substrate. Both reactions occur simultaneously and in competition at the same active site. Although the small subunit is not catalytic it is essential for maximal activity. The protein is Ribulose bisphosphate carboxylase small subunit, chloroplastic of Raphanus sativus (Radish).